The chain runs to 522 residues: Light-independent protochlorophyllide reductase subunit B (522 aa).

A [4Fe-4S] cluster-binding site is contributed by D36. Catalysis depends on D274, which acts as the Proton donor. 409–410 contributes to the substrate binding site; the sequence is GL. Residues 426–464 are disordered; sequence DEAGPSHHGGKAVPASAPRAEATADEGSTPEEAVPPVAA. Low complexity predominate over residues 455-464; that stretch reads PEEAVPPVAA.

Belongs to the ChlB/BchB/BchZ family. Protochlorophyllide reductase is composed of three subunits; BchL, BchN and BchB. Forms a heterotetramer of two BchB and two BchN subunits. Requires [4Fe-4S] cluster as cofactor.

It catalyses the reaction chlorophyllide a + oxidized 2[4Fe-4S]-[ferredoxin] + 2 ADP + 2 phosphate = protochlorophyllide a + reduced 2[4Fe-4S]-[ferredoxin] + 2 ATP + 2 H2O. It functions in the pathway porphyrin-containing compound metabolism; bacteriochlorophyll biosynthesis (light-independent). Its function is as follows. Component of the dark-operative protochlorophyllide reductase (DPOR) that uses Mg-ATP and reduced ferredoxin to reduce ring D of protochlorophyllide (Pchlide) to form chlorophyllide a (Chlide). This reaction is light-independent. The NB-protein (BchN-BchB) is the catalytic component of the complex. This Cereibacter sphaeroides (strain ATCC 17025 / ATH 2.4.3) (Rhodobacter sphaeroides) protein is Light-independent protochlorophyllide reductase subunit B.